We begin with the raw amino-acid sequence, 262 residues long: Glucosamine-6-phosphate deaminase (262 aa).

The Proton acceptor; for enolization step role is filled by aspartate 63. Asparagine 129 acts as the For ring-opening step in catalysis. Histidine 131 serves as the catalytic Proton acceptor; for ring-opening step. The For ring-opening step role is filled by glutamate 136.

This sequence belongs to the glucosamine/galactosamine-6-phosphate isomerase family. NagB subfamily.

The enzyme catalyses alpha-D-glucosamine 6-phosphate + H2O = beta-D-fructose 6-phosphate + NH4(+). It functions in the pathway amino-sugar metabolism; N-acetylneuraminate degradation; D-fructose 6-phosphate from N-acetylneuraminate: step 5/5. In terms of biological role, catalyzes the reversible isomerization-deamination of glucosamine 6-phosphate (GlcN6P) to form fructose 6-phosphate (Fru6P) and ammonium ion. In Bacillus cereus (strain G9842), this protein is Glucosamine-6-phosphate deaminase.